We begin with the raw amino-acid sequence, 585 residues long: Frizzled-5 (585 aa).

An N-terminal signal peptide occupies residues Met-1 to Ala-26. The Extracellular portion of the chain corresponds to Ala-27–Trp-238. The 123-residue stretch at Ser-28–Tyr-150 folds into the FZ domain. 5 disulfide bridges follow: Cys-33–Cys-94, Cys-41–Cys-87, Cys-78–Cys-116, Cys-105–Cys-147, and Cys-109–Cys-133. Asn-47 carries N-linked (GlcNAc...) asparagine glycosylation. N-linked (GlcNAc...) asparagine glycosylation occurs at Asn-151. Residues Thr-156–Gly-179 are disordered. A compositionally biased stretch (pro residues) spans Pro-159 to Ala-175. A helical membrane pass occupies residues Ile-239–Ile-259. Over Asp-260–Pro-270 the chain is Cytoplasmic. Residues Ile-271–Val-291 form a helical membrane-spanning segment. Topologically, residues Gly-292–Cys-315 are extracellular. The chain crosses the membrane as a helical span at residues Thr-316–Leu-336. At Ser-337–Gln-358 the chain is on the cytoplasmic side. The chain crosses the membrane as a helical span at residues Tyr-359–Ser-379. At Ser-380–Gly-402 the chain is on the extracellular side. The helical transmembrane segment at Phe-403–Phe-423 threads the bilayer. Over Val-424–Arg-449 the chain is Cytoplasmic. A helical transmembrane segment spans residues Ile-450–Tyr-470. Residues Glu-471–Tyr-500 lie on the Extracellular side of the membrane. A helical transmembrane segment spans residues Trp-501–Ile-521. Residues Trp-522 to Val-585 lie on the Cytoplasmic side of the membrane. The Lys-Thr-X-X-X-Trp motif, mediates interaction with the PDZ domain of Dvl family members signature appears at Lys-525–Trp-530. The PDZ-binding signature appears at Ser-583–Val-585.

It belongs to the G-protein coupled receptor Fz/Smo family. In terms of assembly, binding of unsaturated fatty acid molecules (via FZ domain) promotes homodimerization. Interacts with WNT2B. Interacts with WNT3A. Interacts with WNT7A. Interacts with GOPC. Post-translationally, ubiquitinated by RNF43 and ZNRF3, leading to its degradation by the proteasome.

It localises to the cell membrane. Its subcellular location is the golgi apparatus membrane. It is found in the synapse. The protein localises to the perikaryon. The protein resides in the cell projection. It localises to the dendrite. Its subcellular location is the axon. In terms of biological role, receptor for Wnt proteins. Functions in the canonical Wnt/beta-catenin signaling pathway. In vitro activates WNT2, WNT10B, WNT5A, but not WNT2B or WNT4 signaling. In neurons, activation by WNT7A promotes formation of synapses. May be involved in transduction and intercellular transmission of polarity information during tissue morphogenesis and/or in differentiated tissues. Plays a role in yolk sac angiogenesis and in placental vascularization. Plays a role in ocular development. This is Frizzled-5 (FZD5) from Homo sapiens (Human).